We begin with the raw amino-acid sequence, 225 residues long: Ribonuclease 3 (225 aa).

In terms of domain architecture, RNase III spans 7-129 (MPRLCRTLGY…IIGAVYIDSG (123 aa)). Residue Glu42 coordinates Mg(2+). Asp46 is an active-site residue. Mg(2+)-binding residues include Asp115 and Glu118. Residue Glu118 is part of the active site. Positions 155–225 (DPKTLLQELL…AADALELMKR (71 aa)) constitute a DRBM domain.

The protein belongs to the ribonuclease III family. In terms of assembly, homodimer. Requires Mg(2+) as cofactor.

It is found in the cytoplasm. It catalyses the reaction Endonucleolytic cleavage to 5'-phosphomonoester.. Functionally, digests double-stranded RNA. Involved in the processing of primary rRNA transcript to yield the immediate precursors to the large and small rRNAs (23S and 16S). Processes some mRNAs, and tRNAs when they are encoded in the rRNA operon. Processes pre-crRNA and tracrRNA of type II CRISPR loci if present in the organism. In Shewanella sediminis (strain HAW-EB3), this protein is Ribonuclease 3.